The following is a 280-amino-acid chain: Meiotic spindle formation protein 2 (280 aa).

The segment at Met1–Val104 is disordered. The span at Leu72 to Ser92 shows a compositional bias: basic and acidic residues. Positions Ser93–Val104 are enriched in low complexity.

As to quaternary structure, interacts with mei-1.

The protein resides in the cytoplasm. Its subcellular location is the cytoskeleton. It is found in the spindle pole. In terms of biological role, forms a heterodimeric complex in conjunction with mei-1 which severs microtubules in vitro in an ATP-dependent manner. This activity may promote rapid reorganization of cellular microtubule arrays. May act to target mei-1 within the cell. Required specifically for meiotic spindle formation in the female germline. The chain is Meiotic spindle formation protein 2 (mei-2) from Caenorhabditis elegans.